Here is a 229-residue protein sequence, read N- to C-terminus: Ribonuclease 3 (229 aa).

The RNase III domain occupies 5-134 (EQKLEQDFGI…FLGALYLDQG (130 aa)). Position 47 (E47) interacts with Mg(2+). Residue D51 is part of the active site. Residues D120 and E123 each coordinate Mg(2+). E123 is an active-site residue. The DRBM domain occupies 160–229 (DYKTALQERL…AKSALEQLGN (70 aa)).

The protein belongs to the ribonuclease III family. As to quaternary structure, homodimer. The cofactor is Mg(2+).

It is found in the cytoplasm. It catalyses the reaction Endonucleolytic cleavage to 5'-phosphomonoester.. Digests double-stranded RNA. Involved in the processing of primary rRNA transcript to yield the immediate precursors to the large and small rRNAs (23S and 16S). Also processes some mRNAs, and tRNAs when they are encoded in the rRNA operon. In terms of biological role, CRISPR (clustered regularly interspaced short palindromic repeat) is an adaptive immune system that provides protection against mobile genetic elements (viruses, transposable elements and conjugative plasmids). CRISPR clusters contain spacers, sequences complementary to antecedent mobile elements, and target invading nucleic acids. CRISPR clusters are transcribed and processed into CRISPR RNA (crRNA). In this organism endogenous ribonuclease 3 and Cas9 are required for correct coprocessing of pre-crRNA and the trans-encoded small RNA (tracrRNA). Cas9, crRNA and tracrRNA are required for cleavage of invading DNA. Complements pre-crRNA and tracRNA coprocessing defects in an rnc deletion in S.pyogenes strain 370. This is Ribonuclease 3 from Streptococcus thermophilus (strain ATCC BAA-491 / LMD-9).